The following is a 360-amino-acid chain: Protein OSB4, chloroplastic (360 aa).

The transit peptide at 1-61 directs the protein to the chloroplast; sequence MQFLGRSISK…AEKSSEEWPR (61 aa). Residues 28–64 form a disordered region; the sequence is SQQFLSTSSTESSSRTRGGGGGNRAEKSSEEWPRPME. The span at 33–43 shows a compositional bias: low complexity; sequence STSSTESSSRT. Residues 51-61 show a composition bias toward basic and acidic residues; sequence RAEKSSEEWPR. In terms of domain architecture, SSB spans 71 to 188; it reads IANSIDLIGY…VMVRDLHYIE (118 aa). PDF region regions lie at residues 224 to 276 and 296 to 344; these read WFDL…SELK and WKDL…EKLP.

The protein resides in the plastid. Its subcellular location is the chloroplast. In terms of biological role, binds single-stranded DNA. The protein is Protein OSB4, chloroplastic (OSB4) of Arabidopsis thaliana (Mouse-ear cress).